We begin with the raw amino-acid sequence, 287 residues long: Ret finger protein-like 4A-like protein 1 (287 aa).

The RING-type; degenerate zinc finger occupies 11–53; it reads CPVCLKDLEEAVQLKCGYACCLQCLNSLQKEPDGEGLLCRFCS. Residues 78–276 form the B30.2/SPRY domain; sequence EPKLKSVLTM…LSICSVINPS (199 aa).

This Homo sapiens (Human) protein is Ret finger protein-like 4A-like protein 1 (RFPL4AL1).